Here is a 396-residue protein sequence, read N- to C-terminus: tRNA-specific 2-thiouridylase MnmA (396 aa).

ATP is bound by residues 35-42 (GLSGGVDS) and Leu-61. The active-site Nucleophile is the Cys-122. Cys-122 and Cys-221 are disulfide-bonded. Gly-147 is a binding site for ATP. Residues 171–173 (KDQ) are interaction with tRNA. The Cysteine persulfide intermediate role is filled by Cys-221. The interaction with tRNA stretch occupies residues 326-327 (RY).

The protein belongs to the MnmA/TRMU family.

The protein resides in the cytoplasm. The enzyme catalyses S-sulfanyl-L-cysteinyl-[protein] + uridine(34) in tRNA + AH2 + ATP = 2-thiouridine(34) in tRNA + L-cysteinyl-[protein] + A + AMP + diphosphate + H(+). Functionally, catalyzes the 2-thiolation of uridine at the wobble position (U34) of tRNA, leading to the formation of s(2)U34. The protein is tRNA-specific 2-thiouridylase MnmA of Parasynechococcus marenigrum (strain WH8102).